The following is a 154-amino-acid chain: Protein Smg homolog (154 aa).

It belongs to the Smg family.

This is Protein Smg homolog from Aromatoleum aromaticum (strain DSM 19018 / LMG 30748 / EbN1) (Azoarcus sp. (strain EbN1)).